The primary structure comprises 375 residues: Chaperone protein DnaJ (375 aa).

Positions 5-70 constitute a J domain; sequence DYYEVLGVNR…RKRASYDQFG (66 aa). Residues 133-211 form a CR-type zinc finger; that stretch reads GLSRTIKVPT…CHGQGRQQQT (79 aa). The Zn(2+) site is built by Cys146, Cys149, Cys163, Cys166, Cys185, Cys188, Cys199, and Cys202. CXXCXGXG motif repeat units lie at residues 146–153, 163–170, 185–192, and 199–206; these read CKTCNGSG, CPRCNGSG, CSVCRGRG, and CTDCHGQG.

Belongs to the DnaJ family. As to quaternary structure, homodimer. The cofactor is Zn(2+).

The protein localises to the cytoplasm. In terms of biological role, participates actively in the response to hyperosmotic and heat shock by preventing the aggregation of stress-denatured proteins and by disaggregating proteins, also in an autonomous, DnaK-independent fashion. Unfolded proteins bind initially to DnaJ; upon interaction with the DnaJ-bound protein, DnaK hydrolyzes its bound ATP, resulting in the formation of a stable complex. GrpE releases ADP from DnaK; ATP binding to DnaK triggers the release of the substrate protein, thus completing the reaction cycle. Several rounds of ATP-dependent interactions between DnaJ, DnaK and GrpE are required for fully efficient folding. Also involved, together with DnaK and GrpE, in the DNA replication of plasmids through activation of initiation proteins. This is Chaperone protein DnaJ from Coxiella burnetii (strain CbuK_Q154) (Coxiella burnetii (strain Q154)).